The primary structure comprises 430 residues: ATP-dependent RNA helicase RhlB (430 aa).

Residues 9–37 carry the Q motif motif; that stretch reads QKFSDFALHPQVIEALETKGFHNCTPIQA. Positions 40 to 219 constitute a Helicase ATP-binding domain; that stretch reads LPFTLSGRDV…FENMNNAEYV (180 aa). Residue 53 to 60 participates in ATP binding; sequence AQTGTGKT. The short motif at 165–168 is the DEAD box element; sequence DEAD. Positions 245–390 constitute a Helicase C-terminal domain; sequence RLLQTLIEEE…VSRYNSDALM (146 aa). Positions 388 to 430 are disordered; sequence ALMTDLPPPKRLTRNRSGNGPRRGGNNNRRSSASRSPNRKRSG. The span at 402–423 shows a compositional bias: low complexity; the sequence is NRSGNGPRRGGNNNRRSSASRS.

The protein belongs to the DEAD box helicase family. RhlB subfamily. As to quaternary structure, component of the RNA degradosome, which is a multiprotein complex involved in RNA processing and mRNA degradation.

The protein resides in the cytoplasm. The enzyme catalyses ATP + H2O = ADP + phosphate + H(+). DEAD-box RNA helicase involved in RNA degradation. Has RNA-dependent ATPase activity and unwinds double-stranded RNA. In Erwinia tasmaniensis (strain DSM 17950 / CFBP 7177 / CIP 109463 / NCPPB 4357 / Et1/99), this protein is ATP-dependent RNA helicase RhlB.